A 343-amino-acid polypeptide reads, in one-letter code: Coiled-coil domain-containing protein 97 (343 aa).

An N-acetylmethionine modification is found at Met1. Residues 1 to 37 (MEAVATATAAKEPDKGCIEPGPGHWGELSRTPVPSKP) are disordered. Thr47 is subject to Phosphothreonine. 3 disordered regions span residues 200–220 (ARTP…ACPL), 234–277 (QQRL…DSEE), and 292–343 (RFLD…LDGD). Positions 224 to 262 (LLQSYEERELQQRLLQQQEEEEACLEEEEEEEDSDEEDQ) form a coiled coil. Residues 241–261 (QEEEEACLEEEEEEEDSDEED) show a composition bias toward acidic residues. Over residues 262-277 (QRSGKDSEAWVPDSEE) the composition is skewed to basic and acidic residues. Phosphoserine occurs at positions 275 and 337. Positions 324–343 (ERYFDEEEPEDAPSPELDGD) are enriched in acidic residues.

As to quaternary structure, associates with splicing factor SF3B complex, involved in branch-site recognition.

It localises to the nucleus. In terms of biological role, may play a role pre-mRNA splicing through the association with the splicing factor SF3B complex which is involved in branch-site recognition. This chain is Coiled-coil domain-containing protein 97 (CCDC97), found in Homo sapiens (Human).